The primary structure comprises 561 residues: Transmembrane protein 151B (561 aa).

Residues 1–10 (MSPPGSAAGE) show a composition bias toward low complexity. Residues 1-42 (MSPPGSAAGESAGGGGGGGGSGVPEEPMASADEGPAREEQRP) form a disordered region. Over residues 11-22 (SAGGGGGGGGSG) the composition is skewed to gly residues. The next 2 membrane-spanning stretches (helical) occupy residues 59–79 (CLLL…CHVT) and 106–126 (YVYI…VECW). The segment covering 489–507 (VNEASCPTEQTRLSSQASM) has biased composition (polar residues). A disordered region spans residues 489–523 (VNEASCPTEQTRLSSQASMRDNEEDEDEEEAGPPP). Residues 510–519 (NEEDEDEEEA) are compositionally biased toward acidic residues.

Belongs to the TMEM151 family.

The protein localises to the membrane. This Mus musculus (Mouse) protein is Transmembrane protein 151B (Tmem151b).